Here is a 481-residue protein sequence, read N- to C-terminus: 3-ketoacyl-CoA synthase 8 (481 aa).

The next 2 membrane-spanning stretches (helical) occupy residues 4–24 and 44–64; these read LKMV…AMKG and LQTI…YMLT. The FAE domain occupies 61-358; the sequence is YMLTRPKPVY…FFITFVKKKY (298 aa). Catalysis depends on residues Cys213, His292, His376, His380, His409, and Asn413.

This sequence belongs to the thiolase-like superfamily. Chalcone/stilbene synthases family. Expressed in leaves and seedlings.

It is found in the endoplasmic reticulum membrane. It carries out the reaction a very-long-chain acyl-CoA + malonyl-CoA + H(+) = a very-long-chain 3-oxoacyl-CoA + CO2 + CoA. The protein operates within lipid metabolism; fatty acid biosynthesis. This is 3-ketoacyl-CoA synthase 8 from Arabidopsis thaliana (Mouse-ear cress).